The following is a 77-amino-acid chain: MKSLLILFAIVAVVAAFPELERERRGVIAAPALAAVPLAPTIALAAPKVAPAIALAPAPKLLAAPAVVAAPGPWKAW.

Positions Met-1–Ala-16 are cleaved as a signal peptide.

As to expression, expressed in the epidermis, hypopharyngeal glands, fat body, trachea, esophagus and stomach.

The protein resides in the secreted. Its function is as follows. Antimicrobial peptide that binds cell wall carbohydrates of microbial symbionts and induces structural damage. Binds the cell wall carbohydrates mannan, N-acetyl-D-glucosamine and lipopolysaccharide. Can target fungi, Gram-negative and Gram-positive bacteria. The polypeptide is Apidermin 2 (Apis mellifera (Honeybee)).